The primary structure comprises 399 residues: Chromosomal replication initiator protein DnaA (399 aa).

The tract at residues 1-64 (MELNALIKKI…EEEVRKLIEV (64 aa)) is domain I, interacts with DnaA modulators. Residues 64-77 (VKEKEEKKKVEIKD) form a domain II region. The interval 78–290 (FLNPKYTLEN…GKIKLIKLKG (213 aa)) is domain III, AAA+ region. ADP contacts are provided by Ile-89, Asn-94, Gly-122, Thr-123, Gly-124, Lys-125, Thr-126, and His-127. Position 89 (Ile-89) interacts with ATP. Residue Gly-122 coordinates ATP. The ATP site is built by Gly-124, Lys-125, Thr-126, and His-127. Thr-126 contacts Mg(2+). Val-156 lines the ssDNA pocket. An ATP-binding site is contributed by Asp-180. Asp-181 provides a ligand contact to Mg(2+). Positions 188, 190, and 191 each coordinate ssDNA. An ATP-binding site is contributed by Arg-277. A domain IV, binds dsDNA region spans residues 291–399 (FEGLERKERK…LEKQAFDKIC (109 aa)).

The protein belongs to the DnaA family. As to quaternary structure, in the presence of ATP analog AMP-PCP forms a linear, right-handed spiral filament with 4 subunits arranged head-to-tail, about 122 Angstroms wide and about 360 Angstroms long. Mg(2+)-AMP-PCP binds at the subunit interface with the gamma phosphate coordinated by adjacent subunits. dsDNA probably wraps on the outside of the filament. ssDNA binds to the center of the helical filament via the AAA+ domain, which stretches the DNA.

It is found in the cytoplasm. Its function is as follows. Plays an essential role in the initiation and regulation of chromosomal replication. ATP-DnaA binds to the origin of replication (oriC) to initiate formation of the DNA replication initiation complex once per cell cycle. Binds the DnaA box (a 9 base pair repeat at the origin) and separates the double-stranded (ds)DNA. Forms a right-handed helical filament on oriC DNA; dsDNA binds to the exterior of the filament while single-stranded (ss)DNA is stabiized in the filament's interior. The ATP-DnaA-oriC complex binds and stabilizes one strand of the AT-rich DNA unwinding element (DUE), permitting loading of DNA polymerase. After initiation quickly degrades to an ADP-DnaA complex that is not apt for DNA replication. Binds acidic phospholipids. In terms of biological role, able to melt short unstable dsDNA (15-mer with melting temperature, TM, 43 degrees Celsius) in the presence of a non-hydrolyzable ATP analog; a more stable dsDNA (20-mer, TM 55 degrees Celsius) is poor substrate. ADP does not support dsDNA melting. Addition of DnaA-AMP-PCP (an ATP analog, beta,gamma-methyleneadenosine 5'-triphosphate) to an oric-containing plasmid causes a DNA shift to more positively supercoiled topological species, stabilizing a positive wrap and right-handed filament as seen in the crystal structure without DNA. Filament formation generated by positive supercoiling may destabilize the origin unwinding element through compensatory negative supercoiling strain. The polypeptide is Chromosomal replication initiator protein DnaA (Aquifex aeolicus (strain VF5)).